The following is a 338-amino-acid chain: Transcription factor AP-4 (338 aa).

Residues 48-99 (IRREIANSNERRRMQSINAGFQSLKTLIPHTDGEKLSKAAILQQTAEYIFSL) enclose the bHLH domain. Positions 100–120 (EQEKTRLLQQNTQLKRFIQEL) are leucine-zipper 1. Positions 118-141 (QELSGSSPKRRRAEDKDEGIGSPD) are disordered. Phosphoserine occurs at positions 123, 124, and 139. A Glycyl lysine isopeptide (Lys-Gly) (interchain with G-Cter in SUMO2) cross-link involves residue lysine 147. The tract at residues 151 to 179 (LRREMIELRQQLDKERSVRMMLEEQVRSL) is leucine-zipper 2. Glycyl lysine isopeptide (Lys-Gly) (interchain with G-Cter in SUMO2) cross-links involve residues lysine 187, lysine 189, and lysine 285. Residues 283–294 (QEKQELEEEQRR) are compositionally biased toward basic and acidic residues. Residues 283 to 338 (QEKQELEEEQRRAVIVKPVRSCPEAPTSDTASDSEASDSDAMDQSREEPSGDGELP) are disordered.

In terms of assembly, efficient DNA binding requires dimerization with another bHLH protein. Homodimer.

The protein resides in the nucleus. In terms of biological role, transcription factor that activates both viral and cellular genes by binding to the symmetrical DNA sequence 5'-CAGCTG-3'. This Homo sapiens (Human) protein is Transcription factor AP-4 (TFAP4).